The following is a 452-amino-acid chain: Major royal jelly protein 2 (452 aa).

An N-terminal signal peptide occupies residues methionine 1–glycine 17. N-linked (GlcNAc...) asparagine glycans are attached at residues asparagine 145 and asparagine 178. Residues asparagine 416 to asparagine 452 are disordered.

Post-translationally, N-linked core structure contains mannose (which consists of 8-alpha-mannosyl residues, one beta-mannosyl residue, and chitobiose). Secreted from the hypopharyngeal glands of the worker honey bee (at protein level); expression peaks at 12 days post eclosion. Expressed in the brains of adult worker bees peaking at 12 days post eclosion (at protein level). Expressed in the spermatheca of adult queen bees (at protein level); Expression levels are higher in mated queens than in virgin queens.

The protein resides in the secreted. In terms of biological role, highly abundant protein component of royal jelly, a substance produced in the hypopharyngeal gland containing proteins, free amino acids, fatty acids, sugars and other nutrients, which is fed to developing larvae by worker nurse bees. Major royal jelly proteins (MRJPs) are high in essential amino acids and probably have a nutritional function in larval food. All larvae are fed some royal jelly (also known as worker jelly) early in their development but it forms the principal source of nutrition for larvae destined to become queen bees. Produced in the spermatheca of adult queen bees, along with other major royal jelly proteins, where it may act as a nutrient supply for sperm stored by mated queens, or be involved in energy metabolism. The chain is Major royal jelly protein 2 from Apis mellifera (Honeybee).